A 382-amino-acid polypeptide reads, in one-letter code: V-type proton ATPase subunit C 1 (382 aa).

T2 is subject to N-acetylthreonine.

The protein belongs to the V-ATPase C subunit family. V-ATPase is a heteromultimeric enzyme made up of two complexes: the ATP-hydrolytic V1 complex and the proton translocation V0 complex. The V1 complex consists of three catalytic AB heterodimers that form a heterohexamer, three peripheral stalks each consisting of EG heterodimers, one central rotor including subunits D and F, and the regulatory subunits C and H. The proton translocation complex V0 consists of the proton transport subunit a, a ring of proteolipid subunits c9c'', rotary subunit d, subunits e and f, and the accessory subunits ATP6AP1/Ac45 and ATP6AP2/PRR.

The protein localises to the cytoplasmic vesicle. The protein resides in the secretory vesicle. It is found in the synaptic vesicle membrane. It localises to the clathrin-coated vesicle membrane. Subunit of the V1 complex of vacuolar(H+)-ATPase (V-ATPase), a multisubunit enzyme composed of a peripheral complex (V1) that hydrolyzes ATP and a membrane integral complex (V0) that translocates protons. V-ATPase is responsible for acidifying and maintaining the pH of intracellular compartments and in some cell types, is targeted to the plasma membrane, where it is responsible for acidifying the extracellular environment. Subunit C is necessary for the assembly of the catalytic sector of the enzyme and is likely to have a specific function in its catalytic activity. In Macaca fascicularis (Crab-eating macaque), this protein is V-type proton ATPase subunit C 1 (ATP6V1C1).